A 193-amino-acid chain; its full sequence is Thymidine kinase (193 aa).

Residues 15–22 (GCMYSGKT) and 87–90 (DELH) each bind ATP. Residue glutamate 88 is the Proton acceptor of the active site. Positions 147, 150, 185, and 188 each coordinate Zn(2+).

The protein belongs to the thymidine kinase family. In terms of assembly, homotetramer.

It is found in the cytoplasm. The enzyme catalyses thymidine + ATP = dTMP + ADP + H(+). The chain is Thymidine kinase from Chloroflexus aurantiacus (strain ATCC 29366 / DSM 635 / J-10-fl).